Here is a 213-residue protein sequence, read N- to C-terminus: C-type lectin domain family 4 member C (213 aa).

Residues 1–21 lie on the Cytoplasmic side of the membrane; that stretch reads MVPEEEPQDREKGLWWFQLKV. A helical; Signal-anchor for type II membrane protein membrane pass occupies residues 22–44; it reads WSMAVVSILLLSVCFTVSSVVPH. The Extracellular portion of the chain corresponds to 45–213; that stretch reads NFMYSKTVKR…SICKMKKIYI (169 aa). Disulfide bonds link Cys-70-Cys-82 and Cys-83-Cys-94. Residues 90 to 207 form the C-type lectin domain; sequence FQSSCYFIST…CHVPQKSICK (118 aa). 2 N-linked (GlcNAc...) asparagine glycosylation sites follow: Asn-110 and Asn-137. Cystine bridges form between Cys-111–Cys-206 and Cys-180–Cys-198. Ser-139 lines the a carbohydrate pocket. Residue Asn-164 is glycosylated (N-linked (GlcNAc...) asparagine). Residues Glu-172, Asn-174, and Glu-178 each contribute to the Ca(2+) site. A carbohydrate-binding positions include Glu-178, 184–186, Asn-194, 194–195, and Gln-202; these read NFR and ND. The Ca(2+) site is built by Asn-194 and Asp-195.

In terms of assembly, homodimer. As to expression, expressed in plasmacytoid dendritic cells (PDCs). Constitutively expressed in immature monocyte-derived dendritic cells (iMDDC) and is significantly down-regulated upon maturation with LPS but not with TNF-alpha.

It is found in the cell membrane. In terms of biological role, lectin-type cell surface receptor which may play a role in antigen capturing by dendritic cells. Specifically recognizes non-sialylated galactose-terminated biantennary glycans containing the trisaccharide epitope Gal(beta1-3/4)GlcNAc(beta1-2)Man. Binds to serum IgG. Efficiently targets ligand into antigen-processing and peptide-loading compartments for presentation to T-cells. May mediate potent inhibition of induction of IFN-alpha/beta expression in plasmacytoid dendritic cells. May act as a signaling receptor that activates protein-tyrosine kinases and mobilizes intracellular calcium. This is C-type lectin domain family 4 member C (CLEC4C) from Homo sapiens (Human).